A 361-amino-acid chain; its full sequence is MSKQQQTQFINPETPGYVGFANLPNQVHRKSVKKGFEFTLMVVGESGLGKSTLINSLFLTDLYPERVIPGAAEKIERTVQIEASTVEIEERGVKLRLTVVDTPGYGDAINCRDCFKTIICYIDEQFERYLHDESGLNRRHIIDNRVHCCFYFISPFGHGLKPLDVAFMKAIHNKVNIVPVIAKADTLTLKERERLKKRILDEIEEHNIKIYHLPDAESDEDEDFKEQTRLLKASIPFSVVGSNQLIEAKGKKVRGRLYPWGVVEVENPEHNDFLKLRTMLITHMQDLQEVTQDLHYENFRSERLKRGGRKVENEDMNKDQILLEKEAELRRMQEMIARMQAQMQLQLQGGDGDSGVHGQHV.

Phosphotyrosine is present on Tyr-17. One can recognise a Septin-type G domain in the interval 34–306 (KGFEFTLMVV…ENFRSERLKR (273 aa)). The interval 44-51 (GESGLGKS) is G1 motif. GTP is bound by residues 44-51 (GESGLGKS), Thr-78, Gly-104, and 183-191 (KADTLTLKE). Residues 101 to 104 (DTPG) form a G3 motif region. The interval 182–185 (AKAD) is G4 motif. Position 190 is an N6-acetyllysine (Lys-190). Tyr-211 bears the Phosphotyrosine mark. The residue at position 218 (Ser-218) is a Phosphoserine. Residues Gly-241 and Arg-256 each coordinate GTP. Residues 260 to 270 (WGVVEVENPEH) are important for dimerization.

Belongs to the TRAFAC class TrmE-Era-EngA-EngB-Septin-like GTPase superfamily. Septin GTPase family. Septins polymerize into heterooligomeric protein complexes that form filaments, and associate with cellular membranes, actin filaments and microtubules. GTPase activity is required for filament formation. Filaments are assembled from asymmetrical heterotrimers, composed of SEPTIN2, SEPTIN6 and SEPTIN7 that associate head-to-head to form a hexameric unit. Interaction between SEPTIN2 and SEPTIN7 seems indirect. Interacts with SEPTIN5. Interaction with SEPTIN4 not detected. Interacts with SEPTIN9. Component of a septin core octameric complex consisting of SEPTIN12, SEPTIN7, SEPTIN6 and SEPTIN2 or SEPTIN4 in the order 12-7-6-2-2-6-7-12 or 12-7-6-4-4-6-7-12 and located in the sperm annulus. Interacts with MAP4. Interacts with DZIP1L.

It localises to the cytoplasm. The protein localises to the cytoskeleton. Its subcellular location is the spindle. It is found in the chromosome. The protein resides in the centromere. It localises to the kinetochore. The protein localises to the cleavage furrow. Its subcellular location is the midbody. It is found in the cell cortex. The protein resides in the cell projection. It localises to the cilium membrane. The protein localises to the cilium. Its subcellular location is the flagellum. In terms of biological role, filament-forming cytoskeletal GTPase. Forms a filamentous structure with SEPTIN12, SEPTIN6, SEPTIN2 and probably SEPTIN4 at the sperm annulus which is required for the structural integrity and motility of the sperm tail during postmeiotic differentiation. Required for normal organization of the actin cytoskeleton. Plays a role in the biogenesis of polarized columnar-shaped epithelium by maintaining polyglutamylated microtubules, thus facilitating efficient vesicle transport, and by impeding MAP4 binding to tubulin. Required for the progression through mitosis. Forms a scaffold at the midplane of the mitotic splindle required to maintain CENPE localization at kinetochores and consequently chromosome congression. During anaphase, may be required for chromosome segregation and spindle elongation. Plays a role in ciliogenesis and collective cell movements. In cilia, required for the integrity of the diffusion barrier at the base of the primary cilium that prevents diffusion of transmembrane proteins between the cilia and plasma membranes: probably acts by regulating the assembly of the tectonic-like complex (also named B9 complex) by localizing TMEM231 protein. The sequence is that of Septin-2 from Bos taurus (Bovine).